Consider the following 195-residue polypeptide: Imidazoleglycerol-phosphate dehydratase (195 aa).

This sequence belongs to the imidazoleglycerol-phosphate dehydratase family.

The protein resides in the cytoplasm. It carries out the reaction D-erythro-1-(imidazol-4-yl)glycerol 3-phosphate = 3-(imidazol-4-yl)-2-oxopropyl phosphate + H2O. Its pathway is amino-acid biosynthesis; L-histidine biosynthesis; L-histidine from 5-phospho-alpha-D-ribose 1-diphosphate: step 6/9. The protein is Imidazoleglycerol-phosphate dehydratase of Pelobacter propionicus (strain DSM 2379 / NBRC 103807 / OttBd1).